A 348-amino-acid chain; its full sequence is Protein RecA (348 aa).

An ATP-binding site is contributed by 65–72; that stretch reads GPESSGKT.

It belongs to the RecA family.

The protein resides in the cytoplasm. In terms of biological role, can catalyze the hydrolysis of ATP in the presence of single-stranded DNA, the ATP-dependent uptake of single-stranded DNA by duplex DNA, and the ATP-dependent hybridization of homologous single-stranded DNAs. It interacts with LexA causing its activation and leading to its autocatalytic cleavage. This Saccharophagus degradans (strain 2-40 / ATCC 43961 / DSM 17024) protein is Protein RecA.